The primary structure comprises 77 residues: RNA-binding protein Hfq (77 aa).

The Sm domain maps to 9-68; the sequence is DPFLNALRKEHIPVAIYLVNGIKLQGQIESFDQFVILLKNTVSQMVYKHAISTVVPARAI.

This sequence belongs to the Hfq family. As to quaternary structure, homohexamer.

RNA chaperone that binds small regulatory RNA (sRNAs) and mRNAs to facilitate mRNA translational regulation in response to envelope stress, environmental stress and changes in metabolite concentrations. Also binds with high specificity to tRNAs. The chain is RNA-binding protein Hfq from Psychromonas ingrahamii (strain DSM 17664 / CCUG 51855 / 37).